Here is a 364-residue protein sequence, read N- to C-terminus: 4-hydroxy-3-methylbut-2-en-1-yl diphosphate synthase (flavodoxin) (364 aa).

Residues Cys-268, Cys-271, Cys-303, and Glu-310 each contribute to the [4Fe-4S] cluster site.

This sequence belongs to the IspG family. It depends on [4Fe-4S] cluster as a cofactor.

It carries out the reaction (2E)-4-hydroxy-3-methylbut-2-enyl diphosphate + oxidized [flavodoxin] + H2O + 2 H(+) = 2-C-methyl-D-erythritol 2,4-cyclic diphosphate + reduced [flavodoxin]. It participates in isoprenoid biosynthesis; isopentenyl diphosphate biosynthesis via DXP pathway; isopentenyl diphosphate from 1-deoxy-D-xylulose 5-phosphate: step 5/6. Functionally, converts 2C-methyl-D-erythritol 2,4-cyclodiphosphate (ME-2,4cPP) into 1-hydroxy-2-methyl-2-(E)-butenyl 4-diphosphate. This chain is 4-hydroxy-3-methylbut-2-en-1-yl diphosphate synthase (flavodoxin), found in Anoxybacillus flavithermus (strain DSM 21510 / WK1).